A 278-amino-acid polypeptide reads, in one-letter code: HTH-type transcriptional activator RhaS (278 aa).

The region spanning 174-272 (NLLLAWLEDH…NWSPRDIRQG (99 aa)) is the HTH araC/xylS-type domain. 2 consecutive DNA-binding regions (H-T-H motif) follow at residues 191 to 212 (DAVA…KQQT) and 239 to 262 (VTDI…RREF).

As to quaternary structure, binds DNA as a dimer.

The protein localises to the cytoplasm. Its function is as follows. Activates expression of the rhaBAD and rhaT operons. The polypeptide is HTH-type transcriptional activator RhaS (Shigella flexneri serotype 5b (strain 8401)).